Here is a 194-residue protein sequence, read N- to C-terminus: Cytochrome bo(3) ubiquinol oxidase subunit 3 (194 aa).

The Cytoplasmic portion of the chain corresponds to 1–18 (MKKKYKIDTNIFSKELLG). Residues 19–41 (FWLYLMSDCIIFCTLFSVYFILV) traverse the membrane as a helical segment. Topologically, residues 42–55 (DNVAQGPSGHNIFQ) are extracellular. A helical membrane pass occupies residues 56-78 (NNLIIIETFLLLFSSFSCNLVLF). Residues 79 to 84 (EMKNKN) are Cytoplasmic-facing. A helical membrane pass occupies residues 85 to 107 (LYMVFLWLGITFLLGLLFVFLEL). Residues 108–126 (FEFFHLINLGFGPTRSGFL) lie on the Extracellular side of the membrane. Residues 127-149 (SSFFVLIATHGIHVISGLIWIIV) traverse the membrane as a helical segment. At 150-169 (MIKYVYTFNITNLIYYRMLC) the chain is on the cytoplasmic side. Residues 170-192 (LNLFWHFLDIVWVFIFSFVYLFG) form a helical membrane-spanning segment. Topologically, residues 193–194 (MV) are extracellular.

Belongs to the cytochrome c oxidase subunit 3 family. Heterooctamer of two A chains, two B chains, two C chains and two D chains.

It is found in the cell membrane. Cytochrome bo(3) ubiquinol terminal oxidase is the component of the aerobic respiratory chain of E.coli that predominates when cells are grown at high aeration. Has proton pump activity across the membrane in addition to electron transfer, pumping 2 protons/electron. The chain is Cytochrome bo(3) ubiquinol oxidase subunit 3 (cyoC) from Buchnera aphidicola subsp. Baizongia pistaciae (strain Bp).